A 156-amino-acid chain; its full sequence is Small ribosomal subunit protein uS7 (156 aa).

Belongs to the universal ribosomal protein uS7 family. As to quaternary structure, part of the 30S ribosomal subunit. Contacts proteins S9 and S11.

Functionally, one of the primary rRNA binding proteins, it binds directly to 16S rRNA where it nucleates assembly of the head domain of the 30S subunit. Is located at the subunit interface close to the decoding center, probably blocks exit of the E-site tRNA. This is Small ribosomal subunit protein uS7 from Cronobacter sakazakii (strain ATCC BAA-894) (Enterobacter sakazakii).